Here is a 166-residue protein sequence, read N- to C-terminus: CDP-archaeol synthase (166 aa).

The next 5 membrane-spanning stretches (helical) occupy residues 1-21 (MPII…LVAN), 55-75 (LLVA…FLGI), 78-98 (IYVS…GAFI), 110-130 (AIGL…IISK), and 131-151 (ISLN…LHIL).

This sequence belongs to the CDP-archaeol synthase family. Mg(2+) is required as a cofactor.

The protein localises to the cell membrane. The catalysed reaction is 2,3-bis-O-(geranylgeranyl)-sn-glycerol 1-phosphate + CTP + H(+) = CDP-2,3-bis-O-(geranylgeranyl)-sn-glycerol + diphosphate. The protein operates within membrane lipid metabolism; glycerophospholipid metabolism. In terms of biological role, catalyzes the formation of CDP-2,3-bis-(O-geranylgeranyl)-sn-glycerol (CDP-archaeol) from 2,3-bis-(O-geranylgeranyl)-sn-glycerol 1-phosphate (DGGGP) and CTP. This reaction is the third ether-bond-formation step in the biosynthesis of archaeal membrane lipids. This chain is CDP-archaeol synthase, found in Sulfurisphaera tokodaii (strain DSM 16993 / JCM 10545 / NBRC 100140 / 7) (Sulfolobus tokodaii).